A 232-amino-acid chain; its full sequence is Phosphatidylserine decarboxylase proenzyme (232 aa).

Ser190 serves as the catalytic Schiff-base intermediate with substrate; via pyruvic acid. Ser190 is subject to Pyruvic acid (Ser); by autocatalysis.

This sequence belongs to the phosphatidylserine decarboxylase family. PSD-A subfamily. As to quaternary structure, heterodimer of a large membrane-associated beta subunit and a small pyruvoyl-containing alpha subunit. Pyruvate is required as a cofactor. Post-translationally, is synthesized initially as an inactive proenzyme. Formation of the active enzyme involves a self-maturation process in which the active site pyruvoyl group is generated from an internal serine residue via an autocatalytic post-translational modification. Two non-identical subunits are generated from the proenzyme in this reaction, and the pyruvate is formed at the N-terminus of the alpha chain, which is derived from the carboxyl end of the proenzyme. The post-translation cleavage follows an unusual pathway, termed non-hydrolytic serinolysis, in which the side chain hydroxyl group of the serine supplies its oxygen atom to form the C-terminus of the beta chain, while the remainder of the serine residue undergoes an oxidative deamination to produce ammonia and the pyruvoyl prosthetic group on the alpha chain.

Its subcellular location is the cell membrane. It carries out the reaction a 1,2-diacyl-sn-glycero-3-phospho-L-serine + H(+) = a 1,2-diacyl-sn-glycero-3-phosphoethanolamine + CO2. Its pathway is phospholipid metabolism; phosphatidylethanolamine biosynthesis; phosphatidylethanolamine from CDP-diacylglycerol: step 2/2. Its function is as follows. Catalyzes the formation of phosphatidylethanolamine (PtdEtn) from phosphatidylserine (PtdSer). This Brucella anthropi (strain ATCC 49188 / DSM 6882 / CCUG 24695 / JCM 21032 / LMG 3331 / NBRC 15819 / NCTC 12168 / Alc 37) (Ochrobactrum anthropi) protein is Phosphatidylserine decarboxylase proenzyme.